Reading from the N-terminus, the 168-residue chain is MEIGQYQPNLDGDGLRIGIVQARFNEPVCNGLADSCIEELERLGVTGEDVLLVTVPGALEIPLALQKLAESAQFDALIALGAVIRGETYHFELVSNESGAGITRIGLDFGIPVANAVLTTENDEQAVARMTEKGRDAARVAVEMANLAVALEQLGGDDEEEDEEEEEA.

5-amino-6-(D-ribitylamino)uracil-binding positions include phenylalanine 24, 58-60 (ALE), and 82-84 (AVI). 87–88 (ET) contributes to the (2S)-2-hydroxy-3-oxobutyl phosphate binding site. The Proton donor role is filled by histidine 90. Asparagine 115 provides a ligand contact to 5-amino-6-(D-ribitylamino)uracil. Arginine 129 is a (2S)-2-hydroxy-3-oxobutyl phosphate binding site.

This sequence belongs to the DMRL synthase family.

It carries out the reaction (2S)-2-hydroxy-3-oxobutyl phosphate + 5-amino-6-(D-ribitylamino)uracil = 6,7-dimethyl-8-(1-D-ribityl)lumazine + phosphate + 2 H2O + H(+). The protein operates within cofactor biosynthesis; riboflavin biosynthesis; riboflavin from 2-hydroxy-3-oxobutyl phosphate and 5-amino-6-(D-ribitylamino)uracil: step 1/2. Functionally, catalyzes the formation of 6,7-dimethyl-8-ribityllumazine by condensation of 5-amino-6-(D-ribitylamino)uracil with 3,4-dihydroxy-2-butanone 4-phosphate. This is the penultimate step in the biosynthesis of riboflavin. The chain is 6,7-dimethyl-8-ribityllumazine synthase from Paraburkholderia phytofirmans (strain DSM 17436 / LMG 22146 / PsJN) (Burkholderia phytofirmans).